Reading from the N-terminus, the 151-residue chain is Ribosome maturation factor RimP (151 aa).

It belongs to the RimP family.

It is found in the cytoplasm. Required for maturation of 30S ribosomal subunits. This chain is Ribosome maturation factor RimP, found in Shewanella sp. (strain ANA-3).